The primary structure comprises 263 residues: Tryptophan synthase alpha chain (263 aa).

Residues Glu49 and Asp60 each act as proton acceptor in the active site.

This sequence belongs to the TrpA family. Tetramer of two alpha and two beta chains.

It carries out the reaction (1S,2R)-1-C-(indol-3-yl)glycerol 3-phosphate + L-serine = D-glyceraldehyde 3-phosphate + L-tryptophan + H2O. The protein operates within amino-acid biosynthesis; L-tryptophan biosynthesis; L-tryptophan from chorismate: step 5/5. The alpha subunit is responsible for the aldol cleavage of indoleglycerol phosphate to indole and glyceraldehyde 3-phosphate. The polypeptide is Tryptophan synthase alpha chain (Cereibacter sphaeroides (strain ATCC 17025 / ATH 2.4.3) (Rhodobacter sphaeroides)).